A 362-amino-acid polypeptide reads, in one-letter code: Diphosphomevalonate decarboxylase (362 aa).

(R)-5-diphosphomevalonate-binding positions include 17–20 (YWGK), Arg72, 150–155 (SGSACR), and Thr206.

It belongs to the diphosphomevalonate decarboxylase family. In terms of assembly, homodimer.

The catalysed reaction is (R)-5-diphosphomevalonate + ATP = isopentenyl diphosphate + ADP + phosphate + CO2. It functions in the pathway isoprenoid biosynthesis; isopentenyl diphosphate biosynthesis via mevalonate pathway; isopentenyl diphosphate from (R)-mevalonate: step 3/3. Its function is as follows. Diphosphomevalonate decarboxylase; part of the second module of ergosterol biosynthesis pathway that includes the middle steps of the pathway. MVD1 converts diphosphomevalonate into isopentenyl diphosphate. The second module is carried out in the vacuole and involves the formation of farnesyl diphosphate, which is also an important intermediate in the biosynthesis of ubiquinone, dolichol, heme and prenylated proteins. Activity by the mevalonate kinase ERG12 first converts mevalonate into 5-phosphomevalonate. 5-phosphomevalonate is then further converted to 5-diphosphomevalonate by the phosphomevalonate kinase ERG8. The diphosphomevalonate decarboxylase MVD then produces isopentenyl diphosphate. The isopentenyl-diphosphate delta-isomerase IDI1 then catalyzes the 1,3-allylic rearrangement of the homoallylic substrate isopentenyl (IPP) to its highly electrophilic allylic isomer, dimethylallyl diphosphate (DMAPP). Finally the farnesyl diphosphate synthase ERG20 catalyzes the sequential condensation of isopentenyl pyrophosphate with dimethylallyl pyrophosphate, and then with the resultant geranylpyrophosphate to the ultimate product farnesyl pyrophosphate. The sequence is that of Diphosphomevalonate decarboxylase from Candida albicans (strain SC5314 / ATCC MYA-2876) (Yeast).